We begin with the raw amino-acid sequence, 369 residues long: Signal recognition particle receptor FtsY (369 aa).

Basic and acidic residues predominate over residues 20–42; that stretch reads GEENKKEPETRQTDQLESKKEET. Residues 20-58 are disordered; it reads GEENKKEPETRQTDQLESKKEETIQQQQNVQQPQAENKI. The span at 44 to 53 shows a compositional bias: low complexity; sequence QQQQNVQQPQ. Residues 180–187, 262–266, and 320–323 contribute to the GTP site; these read GVNGVGKT, DTAGR, and TKVD.

It belongs to the GTP-binding SRP family. FtsY subfamily. As to quaternary structure, part of the signal recognition particle protein translocation system, which is composed of SRP and FtsY.

Its subcellular location is the cell membrane. It is found in the cytoplasm. The catalysed reaction is GTP + H2O = GDP + phosphate + H(+). Its function is as follows. Involved in targeting and insertion of nascent membrane proteins into the cytoplasmic membrane. Acts as a receptor for the complex formed by the signal recognition particle (SRP) and the ribosome-nascent chain (RNC). This chain is Signal recognition particle receptor FtsY, found in Sulfolobus acidocaldarius (strain ATCC 33909 / DSM 639 / JCM 8929 / NBRC 15157 / NCIMB 11770).